Consider the following 197-residue polypeptide: Phosphoheptose isomerase (197 aa).

Residues Met-34 to Gln-196 enclose the SIS domain. Residue Asn-49–Gly-51 coordinates substrate. Positions 58 and 62 each coordinate Zn(2+). Residues Glu-62, Asn-91–Asp-92, Ser-117–Ser-119, Ser-122, and Gln-172 contribute to the substrate site. Zn(2+) contacts are provided by Gln-172 and His-180.

The protein belongs to the SIS family. GmhA subfamily. In terms of assembly, homotetramer. Zn(2+) is required as a cofactor.

The protein resides in the cytoplasm. It catalyses the reaction 2 D-sedoheptulose 7-phosphate = D-glycero-alpha-D-manno-heptose 7-phosphate + D-glycero-beta-D-manno-heptose 7-phosphate. It functions in the pathway carbohydrate biosynthesis; D-glycero-D-manno-heptose 7-phosphate biosynthesis; D-glycero-alpha-D-manno-heptose 7-phosphate and D-glycero-beta-D-manno-heptose 7-phosphate from sedoheptulose 7-phosphate: step 1/1. Its function is as follows. Catalyzes the isomerization of sedoheptulose 7-phosphate in D-glycero-D-manno-heptose 7-phosphate. This chain is Phosphoheptose isomerase, found in Shewanella loihica (strain ATCC BAA-1088 / PV-4).